A 318-amino-acid polypeptide reads, in one-letter code: (1S)-1,7-diacetoxy-luvungin A aldo-keto reductase (318 aa).

Y54 serves as the catalytic Proton donor.

It belongs to the aldo/keto reductase family. As to expression, expressed in flowers, maturing fruits and in juice vesicles.

It carries out the reaction (1S)-1,7-diacetoxy-luvungin A + AH2 + H2O = (1R,2R,3S,8R,10R,11R,15S,16S)-3-(acetyloxy)-15-[(4R)-4-[(2S)-3,3-dimethyloxiran-2-yl]-1,4-dihydroxybutan-2-yl]-2,7,7,11,16-pentamethyl-5-oxo-6-oxatetracyclo[9.7.0.0(2,8).0(12,16)]octadec-12-en-10-yl acetate + acetate + A + H(+). Its pathway is secondary metabolite biosynthesis; terpenoid biosynthesis. Functionally, aldo-keto reductase involved in the biosynthesis of limonoids triterpene natural products such as limonin, a compound with insecticidal activity responsible for the bitter taste in citrus. Can use (1S)-1,7-diacetoxy-luvungin A as substrate. This chain is (1S)-1,7-diacetoxy-luvungin A aldo-keto reductase, found in Citrus sinensis (Sweet orange).